Consider the following 327-residue polypeptide: GMP reductase (327 aa).

The active-site Thioimidate intermediate is the C176. I205–V228 serves as a coordination point for NADP(+).

This sequence belongs to the IMPDH/GMPR family. GuaC type 2 subfamily.

It carries out the reaction IMP + NH4(+) + NADP(+) = GMP + NADPH + 2 H(+). Catalyzes the irreversible NADPH-dependent deamination of GMP to IMP. It functions in the conversion of nucleobase, nucleoside and nucleotide derivatives of G to A nucleotides, and in maintaining the intracellular balance of A and G nucleotides. The sequence is that of GMP reductase from Streptococcus suis (strain 98HAH33).